The sequence spans 136 residues: Large ribosomal subunit protein uL16 (136 aa).

This sequence belongs to the universal ribosomal protein uL16 family. In terms of assembly, part of the 50S ribosomal subunit.

Functionally, binds 23S rRNA and is also seen to make contacts with the A and possibly P site tRNAs. This chain is Large ribosomal subunit protein uL16, found in Glaesserella parasuis serovar 5 (strain SH0165) (Haemophilus parasuis).